Reading from the N-terminus, the 723-residue chain is Threonine--tRNA ligase 1, cytoplasmic (723 aa).

Positions 1–10 (MSEEQASSPS) are enriched in polar residues. A disordered region spans residues 1-49 (MSEEQASSPSAKMGDEEKPVGAGEEKQKEGSKKKNKEGSGDGGRAELNP). Basic and acidic residues predominate over residues 13-39 (MGDEEKPVGAGEEKQKEGSKKKNKEGS). At Ser-39 the chain carries Phosphoserine. A TGS domain is found at 79–143 (DSKPIKVTLP…EEDCTLELLK (65 aa)). Lys-243 is modified (N6-acetyllysine). Thr-246 is subject to Phosphothreonine. Tyr-298 carries the phosphotyrosine modification. Residue Thr-453 is modified to Phosphothreonine. Ser-702 is modified (phosphoserine).

Belongs to the class-II aminoacyl-tRNA synthetase family. Homodimer. Post-translationally, ISGylated.

The protein resides in the cytoplasm. It carries out the reaction tRNA(Thr) + L-threonine + ATP = L-threonyl-tRNA(Thr) + AMP + diphosphate + H(+). Functionally, catalyzes the attachment of threonine to tRNA(Thr) in a two-step reaction: threonine is first activated by ATP to form Thr-AMP and then transferred to the acceptor end of tRNA(Thr). Also edits incorrectly charged tRNA(Thr) via its editing domain, at the post-transfer stage. This is Threonine--tRNA ligase 1, cytoplasmic (TARS1) from Bos taurus (Bovine).